Consider the following 138-residue polypeptide: Large ribosomal subunit protein uL16 (138 aa).

This sequence belongs to the universal ribosomal protein uL16 family. Part of the 50S ribosomal subunit.

Functionally, binds 23S rRNA and is also seen to make contacts with the A and possibly P site tRNAs. The chain is Large ribosomal subunit protein uL16 from Neisseria gonorrhoeae (strain ATCC 700825 / FA 1090).